Consider the following 454-residue polypeptide: Pup--protein ligase (454 aa).

E9 is a binding site for Mg(2+). R53 provides a ligand contact to ATP. Mg(2+) is bound at residue Y55. The active-site Proton acceptor is the D57. Position 63 (E63) interacts with Mg(2+). ATP is bound by residues T66 and W421.

The protein belongs to the Pup ligase/Pup deamidase family. Pup-conjugating enzyme subfamily.

The catalysed reaction is ATP + [prokaryotic ubiquitin-like protein]-L-glutamate + [protein]-L-lysine = ADP + phosphate + N(6)-([prokaryotic ubiquitin-like protein]-gamma-L-glutamyl)-[protein]-L-lysine.. It participates in protein degradation; proteasomal Pup-dependent pathway. It functions in the pathway protein modification; protein pupylation. Its function is as follows. Catalyzes the covalent attachment of the prokaryotic ubiquitin-like protein modifier Pup to the proteasomal substrate proteins, thereby targeting them for proteasomal degradation. This tagging system is termed pupylation. The ligation reaction involves the side-chain carboxylate of the C-terminal glutamate of Pup and the side-chain amino group of a substrate lysine. The polypeptide is Pup--protein ligase (Frankia casuarinae (strain DSM 45818 / CECT 9043 / HFP020203 / CcI3)).